We begin with the raw amino-acid sequence, 219 residues long: Protein YNG1 (219 aa).

The PHD-type; degenerate zinc finger occupies 155–204; that stretch reads EVYCFCRNVSYGPMVACDNPACPFEWFHYGCVGLKQAPKGKWYCSKDCKE. Residues Cys-158, Cys-160, Cys-171, Cys-176, His-182, Cys-185, Cys-198, and Cys-202 each contribute to the Zn(2+) site.

It belongs to the ING family. Component of the NuA3 histone acetyltransferase (HAT) complex. The NuA3 HAT complex has 2 functionally distinct forms that participate in transcription. The NuA3a HAT complex is composed of at least NTO1, SAS3, TAF14, YNG1 and EAF6. The NuA3b HAT complex contains an additional subunit, PDP3. Interacts with H3K4me3 and to a lesser extent with H3K4me2.

Its subcellular location is the nucleus. In terms of biological role, histone-binding component of the NuA3a histone acetyltransferase complex. Targets the NuA3a HAT complex via histone H3K4me3 to facilitate transcription initiation at promoter regions. SAS3 then acetylates H3K14, leading to transcription initiation at a subset of genes. YNG1 is required for the HAT activity of NuA3 but not for its integrity. Mediates the interaction of SAS3 with nucleosomes. The protein is Protein YNG1 (YNG1) of Saccharomyces cerevisiae (strain ATCC 204508 / S288c) (Baker's yeast).